The sequence spans 700 residues: Leucine zipper putative tumor suppressor 3 (700 aa).

Disordered stretches follow at residues 1 to 20, 40 to 121, 133 to 188, and 202 to 344; these read MAPA…PAPH, RADP…SEDK, LRGS…SEPL, and FHSM…PPSP. The span at 109–121 shows a compositional bias: basic and acidic residues; the sequence is NRERPGRYPSEDK. Polar residues predominate over residues 203–216; the sequence is HSMQNLCPPQTNGT. 2 stretches are compositionally biased toward low complexity: residues 248–265 and 301–321; these read DSGR…SSYS and GTSD…MGRS. Gly residues predominate over residues 322–333; it reads GHLGSGEGGNGG. Phosphoserine is present on residues S343 and S345. Coiled-coil stretches lie at residues 345–523 and 597–666; these read SALI…SLRD and TRAL…RLRE. Residues 662–700 are disordered; sequence RRLRERGAAGGSSTPTPQHGEEKKAWTPSRLERIESTEI. Basic and acidic residues predominate over residues 680–700; that stretch reads HGEEKKAWTPSRLERIESTEI.

Belongs to the LZTS3 family. In terms of assembly, interacts (via C-terminus) with SHANK3 (via PDZ domain). Interacts (via coiled coil) with SIPA1L1. Can form homooligomers.

The protein localises to the synapse. It localises to the postsynaptic density. The protein resides in the cell projection. It is found in the dendritic spine. Its subcellular location is the dendrite. The protein localises to the cytoplasm. It localises to the cytoskeleton. May be involved in promoting the maturation of dendritic spines, probably via regulating SIPA1L1 levels at the postsynaptic density of synapses. In Mus musculus (Mouse), this protein is Leucine zipper putative tumor suppressor 3.